Reading from the N-terminus, the 151-residue chain is Endoribonuclease YbeY (151 aa).

Positions 108, 112, and 118 each coordinate Zn(2+).

The protein belongs to the endoribonuclease YbeY family. Zn(2+) serves as cofactor.

Its subcellular location is the cytoplasm. Its function is as follows. Single strand-specific metallo-endoribonuclease involved in late-stage 70S ribosome quality control and in maturation of the 3' terminus of the 16S rRNA. In Porphyromonas gingivalis (strain ATCC BAA-308 / W83), this protein is Endoribonuclease YbeY.